A 240-amino-acid polypeptide reads, in one-letter code: tRNA (guanine-N(1)-)-methyltransferase (240 aa).

Residues G112 and 132 to 137 (LGDFVL) contribute to the S-adenosyl-L-methionine site.

This sequence belongs to the RNA methyltransferase TrmD family. Homodimer.

The protein localises to the cytoplasm. The catalysed reaction is guanosine(37) in tRNA + S-adenosyl-L-methionine = N(1)-methylguanosine(37) in tRNA + S-adenosyl-L-homocysteine + H(+). Functionally, specifically methylates guanosine-37 in various tRNAs. This chain is tRNA (guanine-N(1)-)-methyltransferase, found in Cyanothece sp. (strain PCC 7425 / ATCC 29141).